The following is a 309-amino-acid chain: Homoserine kinase (309 aa).

91-101 is an ATP binding site; sequence PVGSGLGSSAC.

It belongs to the GHMP kinase family. Homoserine kinase subfamily.

The protein resides in the cytoplasm. It carries out the reaction L-homoserine + ATP = O-phospho-L-homoserine + ADP + H(+). Its pathway is amino-acid biosynthesis; L-threonine biosynthesis; L-threonine from L-aspartate: step 4/5. Its function is as follows. Catalyzes the ATP-dependent phosphorylation of L-homoserine to L-homoserine phosphate. The sequence is that of Homoserine kinase from Hamiltonella defensa subsp. Acyrthosiphon pisum (strain 5AT).